The primary structure comprises 423 residues: F-box/LRR-repeat protein 2 (423 aa).

One can recognise an F-box domain in the interval 9–55 (GLINKKLPKELLLRIFSFLDIVTLCRCAQISKAWNILALDGSNWQRI). 13 LRR repeats span residues 61 to 87 (QTDV…SLRG), 88 to 113 (CIGV…NLNG), 114 to 139 (CTKI…DLTS), 140 to 165 (CVSI…NLSW), 166 to 191 (CDQI…LLRG), 192 to 217 (CTQL…NLQS), 218 to 243 (CSRI…CLSG), 244 to 269 (CSNL…EAAR), 270 to 295 (CSHL…DLEE), 296 to 321 (CILI…SLSH), 322 to 350 (CELI…ELDN), 351 to 375 (CLLI…ELYD), and 376 to 401 (CQQV…AYFA). The segment at 80–90 (LRKLSLRGCIG) is interaction with Calmodulin. A Glycyl lysine isopeptide (Lys-Gly) (interchain with G-Cter in ubiquitin) cross-link involves residue lysine 201. Threonine 404 is subject to Phosphothreonine. A lipid anchor (S-geranylgeranyl cysteine) is attached at cysteine 420. The CAAX motif signature appears at 420 to 423 (CVIL).

Part of the SCF (SKP1-CUL1-F-box) E3 ubiquitin-protein ligase complex SCF(FBXL2) composed of CUL1, SKP1, RBX1 and FBXL2. Interacts with calmodulin; may antagonize substrate ubiquitination by SCF(FBXL2). May interact with PIK3R1. Interacts with PTPN13. In terms of assembly, (Microbial infection) Interacts with hepatitis C virus non-structural protein 5A (NS5A) and less efficiently, with hepatitis C virus non-structural protein 5B (NS5B); a reaction crucial for hepatitis C virus RNA replication. Post-translationally, phosphorylated by GSK-beta (GSK3B), promoting recognition by FBXO3, leading to its ubiquitination by the SCF(FBXO3) complex. Ubiquitinated at Lys-201 by the SCF(FBXO3) complex in response to lipopolysaccharide (LPS), leading to its degradation by the proteasome. In terms of tissue distribution, expressed in brain, heart, kidney, liver, lung, pancreas and placenta.

It is found in the membrane. Its pathway is protein modification; protein ubiquitination. Functionally, calcium-activated substrate recognition component of the SCF (SKP1-cullin-F-box protein) E3 ubiquitin-protein ligase complex, SCF(FBXL2), which mediates the ubiquitination and subsequent proteasomal degradation of target proteins. Unlike many F-box proteins, FBXL2 does not seem to target phosphodegron within its substrates but rather calmodulin-binding motifs and is thereby antagonized by calmodulin. This is the case for the cyclins CCND2 and CCND3 which polyubiquitination and subsequent degradation are inhibited by calmodulin. Through CCND2 and CCND3 degradation induces cell-cycle arrest in G(0). SCF(FBXL2) also mediates PIK3R2 ubiquitination and proteasomal degradation thereby regulating phosphatidylinositol 3-kinase signaling and autophagy. PCYT1A monoubiquitination by SCF(FBXL2) and subsequent degradation regulates synthesis of phosphatidylcholine, which is utilized for formation of membranes and of pulmonary surfactant. The SCF(FBXL2) complex acts as a regulator of inflammation by mediating ubiquitination and degradation of TRAF proteins (TRAF1, TRAF2, TRAF3, TRAF4, TRAF5 and TRAF6). The SCF(FBXL2) complex acts as a negative regulator of the NLRP3 inflammasome by mediating ubiquitination and degradation of NLRP3. The chain is F-box/LRR-repeat protein 2 from Homo sapiens (Human).